The sequence spans 156 residues: Deoxyuridine 5'-triphosphate nucleotidohydrolase (156 aa).

Substrate is bound by residues 76 to 78 (RSG), asparagine 89, 93 to 95 (TVD), and lysine 103.

Belongs to the dUTPase family. The cofactor is Mg(2+).

The enzyme catalyses dUTP + H2O = dUMP + diphosphate + H(+). It functions in the pathway pyrimidine metabolism; dUMP biosynthesis; dUMP from dCTP (dUTP route): step 2/2. This enzyme is involved in nucleotide metabolism: it produces dUMP, the immediate precursor of thymidine nucleotides and it decreases the intracellular concentration of dUTP so that uracil cannot be incorporated into DNA. The protein is Deoxyuridine 5'-triphosphate nucleotidohydrolase of Rhizobium rhizogenes (strain K84 / ATCC BAA-868) (Agrobacterium radiobacter).